Reading from the N-terminus, the 294-residue chain is MASFAQWISGARPRTLPNAVAPVVAGTGTAAWLHSAVWWKALLALVVAVALVIGVNYANDYSDGIRGTDDHRAGPMRLVGSRLAFPRSVLTAAVVGLTVSTVAGLALALLSAPWLIMVGATCIAGAWLYTGSSKPYGYKGFGEVAVFVFFGLVAVLGTEYTQALRVDWVGLVLAVSTGALSSSVLVANNLRDIHTDTQSHKFTLAVRLGDAHTRQLYQALLVATGVLTVVLMVATSWCAVGLVATPLALRAMRPVRSGRMGPDLTPVLRDTGLAMVVWAIAVAGALTLAGSVTY.

The next 6 membrane-spanning stretches (helical) occupy residues 35–55 (SAVW…VIGV), 103–123 (AGLA…ATCI), 140–160 (GFGE…GTEY), 166–186 (VDWV…SVLV), 220–240 (LLVA…WCAV), and 272–292 (GLAM…AGSV).

This sequence belongs to the MenA family. Type 1 subfamily.

It localises to the cell membrane. It carries out the reaction an all-trans-polyprenyl diphosphate + 1,4-dihydroxy-2-naphthoate + H(+) = a 2-demethylmenaquinol + CO2 + diphosphate. The protein operates within quinol/quinone metabolism; menaquinone biosynthesis; menaquinol from 1,4-dihydroxy-2-naphthoate: step 1/2. Functionally, conversion of 1,4-dihydroxy-2-naphthoate (DHNA) to demethylmenaquinone (DMK). The sequence is that of 1,4-dihydroxy-2-naphthoate octaprenyltransferase from Mycobacterium leprae (strain TN).